A 60-amino-acid polypeptide reads, in one-letter code: Metallothionein (60 aa).

The tract at residues 1-28 is beta; it reads MDCACATGGSCSCAGSCKCENCKCTSCK. The a divalent metal cation site is built by Cys3, Cys5, Cys11, Cys13, Cys17, Cys19, Cys22, Cys24, Cys27, Cys31, Cys32, Cys34, Cys35, Cys39, Cys42, Cys46, Cys48, Cys56, Cys58, and Cys59. Residues 29 to 60 are alpha; the sequence is KSCCSCCPSECEKCGQGCVCKGGSSEKCSCCN.

The protein belongs to the metallothionein superfamily. Type 1 family.

In terms of biological role, metallothioneins have a high content of cysteine residues that bind various heavy metals. This chain is Metallothionein (MT-A), found in Ambystoma mexicanum (Axolotl).